We begin with the raw amino-acid sequence, 589 residues long: 3-(3-hydroxy-phenyl)propionate/3-hydroxycinnamic acid hydroxylase (589 aa).

Residues 15-44 (DVLIIGAGPVGLTLANTLGMAGVRVIVAEK) and 283-293 (FRVDRILLAGD) contribute to the FAD site.

This sequence belongs to the PheA/TfdB FAD monooxygenase family. FAD serves as cofactor.

The catalysed reaction is 3-(3-hydroxyphenyl)propanoate + NADH + O2 + H(+) = 3-(2,3-dihydroxyphenyl)propanoate + NAD(+) + H2O. It catalyses the reaction (2E)-3-(3-hydroxyphenyl)prop-2-enoate + NADH + O2 + H(+) = (2E)-3-(2,3-dihydroxyphenyl)prop-2-enoate + NAD(+) + H2O. The protein operates within aromatic compound metabolism; 3-phenylpropanoate degradation. Its function is as follows. Catalyzes the insertion of one atom of molecular oxygen into position 2 of the phenyl ring of 3-(3-hydroxyphenyl)propionate (3-HPP) and hydroxycinnamic acid (3HCI). This Comamonas testosteroni (Pseudomonas testosteroni) protein is 3-(3-hydroxy-phenyl)propionate/3-hydroxycinnamic acid hydroxylase.